A 520-amino-acid chain; its full sequence is 2-isopropylmalate synthase (520 aa).

One can recognise a Pyruvate carboxyltransferase domain in the interval 12–274 (IRIFDTTLRD…DSAINTPRIV (263 aa)). Mn(2+)-binding residues include Asp21, His209, His211, and Asn245. Positions 396–520 (RLASMTISDV…VIAGKTAAVA (125 aa)) are regulatory domain.

It belongs to the alpha-IPM synthase/homocitrate synthase family. LeuA type 1 subfamily. In terms of assembly, homodimer. It depends on Mn(2+) as a cofactor.

The protein localises to the cytoplasm. The enzyme catalyses 3-methyl-2-oxobutanoate + acetyl-CoA + H2O = (2S)-2-isopropylmalate + CoA + H(+). Its pathway is amino-acid biosynthesis; L-leucine biosynthesis; L-leucine from 3-methyl-2-oxobutanoate: step 1/4. In terms of biological role, catalyzes the condensation of the acetyl group of acetyl-CoA with 3-methyl-2-oxobutanoate (2-ketoisovalerate) to form 3-carboxy-3-hydroxy-4-methylpentanoate (2-isopropylmalate). In Xanthomonas oryzae pv. oryzae (strain MAFF 311018), this protein is 2-isopropylmalate synthase.